Consider the following 748-residue polypeptide: Wings apart-like protein homolog 1 (748 aa).

Disordered regions lie at residues 23–199 (TLAQ…VYAT) and 614–644 (EGGC…RLDR). Residues 35 to 64 (PSVRSSDSPDVPDTPDVPVNQLSSPPLSLP) are compositionally biased toward low complexity. Composition is skewed to polar residues over residues 68–79 (SEGNAETLQNLS) and 87–96 (LSQSSTSSLN). Residues 172–182 (ISSSSNRYSSR) are compositionally biased toward low complexity. In terms of domain architecture, WAPL spans 205 to 723 (KPLASGYGSR…KRLYDFTKAT (519 aa)). A compositionally biased stretch (acidic residues) spans 616–633 (GCGDEEEEEEGGDESSDE). Over residues 634–644 (DGVRKDGRLDR) the composition is skewed to basic and acidic residues.

It belongs to the WAPL family.

The protein resides in the nucleus. Functionally, regulator of meiotic chromosome structure and function, playing a role in sister chromatid cohesion, possibly via antagonizing the coh-3/-4 association with axial elements in nuclei during late prophase, cohesin association with chromatin, DNA double strand break repair and polar body positioning following meiotic divisions during oogenesis. Regulates the morphogenesis and temporal assembly of axial elements to control the organization of meiotic chromosomes in pachytene nuclei and is also involved in meiotic chromosomal remodeling in late pachytene nuclei. Required for the removal of the cohesin component scc-1 from mitotic chromosomes. In Caenorhabditis elegans, this protein is Wings apart-like protein homolog 1.